The following is a 251-amino-acid chain: Gamma-glutamyl peptidase 5 (251 aa).

Positions 17–214 (STFVKKAYGG…IDRVVNLKLM (198 aa)) constitute a Glutamine amidotransferase type-1 domain. Cys-101 (nucleophile) is an active-site residue. Residues His-193 and Glu-195 contribute to the active site.

Belongs to the peptidase C26 family.

It is found in the cytoplasm. It localises to the cytosol. The protein operates within secondary metabolite biosynthesis. Involved in glucosinolate biosynthesis. Hydrolyzes the gamma-glutamyl peptide bond of several glutathione (GSH) conjugates to produce Cys-Gly conjugates related to glucosinolates. The gamma-Glu-Cys-Gly-GSH conjugates are the sulfur-donating molecule in glucosinolate biosynthesis. The sequence is that of Gamma-glutamyl peptidase 5 from Arabidopsis thaliana (Mouse-ear cress).